Here is a 2474-residue protein sequence, read N- to C-terminus: Highly reducing polyketide synthase 40 (2474 aa).

The region spanning 1 to 294 (MFKETEIQQR…GSNAHIIIDD (294 aa)) is the Ketosynthase family 3 (KS3) domain. Residues Cys-42, His-177, and His-217 each act as for beta-ketoacyl synthase activity in the active site. Residues 459 to 798 (FVFTGQGAQW…GYESVLRRGT (340 aa)) enclose the Malonyl-CoA:ACP transacylase (MAT) domain. The N-terminal hotdog fold stretch occupies residues 864-998 (HELLGAPVPD…GLVVTEYEQP (135 aa)). Positions 864–1182 (HELLGAPVPD…ITTVARSEGA (319 aa)) constitute a PKS/mFAS DH domain. The active-site Proton acceptor; for dehydratase activity is His-896. The C-terminal hotdog fold stretch occupies residues 1027 to 1182 (KVETSFRQLY…ITTVARSEGA (156 aa)). Asp-1093 (proton donor; for dehydratase activity) is an active-site residue. The tract at residues 1232–1535 (VEMMCFLYIK…DLHIYDFPDH (304 aa)) is methyltransferase (CMet) domain. In terms of domain architecture, Enoyl reductase (ER) spans 1770-2063 (GLLDSLQFQD…SGSHMGKLVL (294 aa)). A Ketoreductase (KR) domain is found at 2087-2263 (ASYLLSGGLG…PGVAVDLGMI (177 aa)). One can recognise a Carrier domain in the interval 2385-2462 (DAAKIVSAAI…ELAELAAKRS (78 aa)). Position 2422 is an O-(pantetheine 4'-phosphoryl)serine (Ser-2422).

Requires pantetheine 4'-phosphate as cofactor.

The protein operates within secondary metabolite biosynthesis. Highly reducing polyketide synthase; part of the gene cluster that mediates the biosynthesis of the gamma-pyrones fusapyrone (FPY) and deoxyfusapyrone (dFPY). FPY is an undecaketide and thus likely synthesized by the polyketide synthase FPY1 from acetyl-CoA functioning as starter unit and the addition of 10 malonyl-CoA extender units by successive Claisen-condensations. Next to this, FPY shares some rare features: C-glycosylated 4-deoxyglucose at C-3, a gem-dimethyl group at C-13, and an alpha-beta to beta-gamma double bond shift at C-20. During FPY biosynthesis mono-C-methyl groups are transferred to the tetra-, penta-, hexa- and heptaketide, while two C-methyl groups are transferred to the nonaketide, suggesting that the CMet domain is programmed to selectively catalyze two successive C-alpha-methylation reactions of the nonaketide, while other alpha-carbons are non- or mono-methylated only. While the origin of the 4'-deoxyglucose moiety remains opaque, its transfer to C-3 is most likely mediated by the C-glycosyltransferase FPY2. Next to this, the hydroxyl group present at C-33 and discriminating between FPY and dFPY, is likely to be installed by the cytochrome P450 monooxygenase FPY7. No putative function can be predicted for the remaining genes FPY3-FPY6. The protein is Highly reducing polyketide synthase 40 of Fusarium mangiferae (Mango malformation disease fungus).